The following is a 257-amino-acid chain: L-aspartate dehydrogenase (257 aa).

Residues Ala124 and Asn180 each coordinate NAD(+). His208 is a catalytic residue.

This sequence belongs to the L-aspartate dehydrogenase family.

The enzyme catalyses L-aspartate + NADP(+) + H2O = oxaloacetate + NH4(+) + NADPH + H(+). It catalyses the reaction L-aspartate + NAD(+) + H2O = oxaloacetate + NH4(+) + NADH + H(+). The protein operates within cofactor biosynthesis; NAD(+) biosynthesis; iminoaspartate from L-aspartate (dehydrogenase route): step 1/1. Functionally, specifically catalyzes the NAD or NADP-dependent dehydrogenation of L-aspartate to iminoaspartate. The protein is L-aspartate dehydrogenase of Methanothermobacter thermautotrophicus (strain ATCC 29096 / DSM 1053 / JCM 10044 / NBRC 100330 / Delta H) (Methanobacterium thermoautotrophicum).